We begin with the raw amino-acid sequence, 601 residues long: Probable inactive receptor kinase At1g27190 (601 aa).

The N-terminal stretch at Met1–Ala24 is a signal peptide. The N-linked (GlcNAc...) asparagine glycan is linked to Asn52. LRR repeat units lie at residues Arg73–Cys95, Ser97–Trp119, Tyr122–Cys144, Phe146–Asp169, and Arg170–Phe192. A helical membrane pass occupies residues Ile221–Phe241. Phosphothreonine is present on Thr298. The Protein kinase domain maps to Phe301–Ser586. ATP is bound by residues Asp307 to Ser315 and Lys329. A Phosphoserine modification is found at Ser383. Phosphothreonine is present on Thr399. At Tyr476 the chain carries Phosphotyrosine. Ser478 carries the phosphoserine modification. The residue at position 479 (Thr479) is a Phosphothreonine. Residues Ser483 and Ser586 each carry the phosphoserine modification.

It belongs to the protein kinase superfamily. Ser/Thr protein kinase family.

The protein resides in the membrane. This chain is Probable inactive receptor kinase At1g27190, found in Arabidopsis thaliana (Mouse-ear cress).